Reading from the N-terminus, the 115-residue chain is V-type proton ATPase subunit G (115 aa).

This sequence belongs to the V-ATPase G subunit family. In terms of assembly, V-ATPase is a heteromultimeric enzyme composed of a peripheral catalytic V1 complex (components A to H) attached to an integral membrane V0 proton pore complex (components: a, c, c', c'', d, e, f and VOA1).

It localises to the vacuole membrane. Subunit of the V1 complex of vacuolar(H+)-ATPase (V-ATPase), a multisubunit enzyme composed of a peripheral complex (V1) that hydrolyzes ATP and a membrane integral complex (V0) that translocates protons. V-ATPase is responsible for acidifying and maintaining the pH of intracellular compartments. This Neurospora crassa (strain ATCC 24698 / 74-OR23-1A / CBS 708.71 / DSM 1257 / FGSC 987) protein is V-type proton ATPase subunit G (vma-10).